The chain runs to 484 residues: UDP-N-acetylmuramate--L-alanine ligase (484 aa).

123–129 (GTHGKTT) is an ATP binding site.

This sequence belongs to the MurCDEF family.

It localises to the cytoplasm. It carries out the reaction UDP-N-acetyl-alpha-D-muramate + L-alanine + ATP = UDP-N-acetyl-alpha-D-muramoyl-L-alanine + ADP + phosphate + H(+). The protein operates within cell wall biogenesis; peptidoglycan biosynthesis. In terms of biological role, cell wall formation. The sequence is that of UDP-N-acetylmuramate--L-alanine ligase from Pseudomonas fluorescens (strain ATCC BAA-477 / NRRL B-23932 / Pf-5).